The chain runs to 450 residues: Ribulose bisphosphate carboxylase large chain (450 aa).

The residue at position 4 (Lys-4) is an N6,N6,N6-trimethyllysine. 2 residues coordinate substrate: Asn-113 and Thr-163. Lys-165 functions as the Proton acceptor in the catalytic mechanism. A substrate-binding site is contributed by Lys-167. Mg(2+) is bound by residues Lys-191, Asp-193, and Glu-194. The residue at position 191 (Lys-191) is an N6-carboxylysine. The active-site Proton acceptor is His-284. 3 residues coordinate substrate: Arg-285, His-317, and Ser-369.

It belongs to the RuBisCO large chain family. Type I subfamily. Heterohexadecamer of 8 large chains and 8 small chains; disulfide-linked. The disulfide link is formed within the large subunit homodimers. Requires Mg(2+) as cofactor. Post-translationally, the disulfide bond which can form in the large chain dimeric partners within the hexadecamer appears to be associated with oxidative stress and protein turnover.

Its subcellular location is the plastid. The protein localises to the chloroplast. It catalyses the reaction 2 (2R)-3-phosphoglycerate + 2 H(+) = D-ribulose 1,5-bisphosphate + CO2 + H2O. The catalysed reaction is D-ribulose 1,5-bisphosphate + O2 = 2-phosphoglycolate + (2R)-3-phosphoglycerate + 2 H(+). Its function is as follows. RuBisCO catalyzes two reactions: the carboxylation of D-ribulose 1,5-bisphosphate, the primary event in carbon dioxide fixation, as well as the oxidative fragmentation of the pentose substrate in the photorespiration process. Both reactions occur simultaneously and in competition at the same active site. This chain is Ribulose bisphosphate carboxylase large chain, found in Crassula rupestris subsp. marnieriana (Pygmyweed).